Reading from the N-terminus, the 89-residue chain is Small ribosomal subunit protein uS15c (89 aa).

The protein belongs to the universal ribosomal protein uS15 family. Part of the 30S ribosomal subunit.

Its subcellular location is the plastid. The protein resides in the organellar chromatophore. The chain is Small ribosomal subunit protein uS15c (rps15) from Paulinella chromatophora.